Here is a 663-residue protein sequence, read N- to C-terminus: Alpha-amylase MalA (663 aa).

Disordered stretches follow at residues 1–28 (MHHPGPPRFVATGDEVELAPRDPDPTAT) and 80–135 (GTLE…LTLR). Gly residues predominate over residues 92–111 (RSGGHSGGVSGGRSGPGRSG). Residue D411 is the Nucleophile of the active site. E440 acts as the Proton donor in catalysis.

This sequence belongs to the glycosyl hydrolase 13 family.

The protein resides in the cytoplasm. The catalysed reaction is Endohydrolysis of (1-&gt;4)-alpha-D-glucosidic linkages in polysaccharides containing three or more (1-&gt;4)-alpha-linked D-glucose units.. It participates in glycan degradation; starch degradation. Its activity is regulated as follows. Stable and active over a broad range of NaCl concentrations (0.5 to 4.2 M NaCl), with maximal activity at 2.6 M NaCl. 83% and 94% of the maximum activity at 0.6 and 4.2 M NaCl, respectively. Active and stable also in KCl. Its function is as follows. Alpha-amylase that cleaves starch into oligosaccharides, the first step in starch degradation. Endo-acting enzyme which prefers a linear polysaccharide to branched polysaccharides hydrolyzing alpha-1,4 glucosidic bonds efficiently. Also has transglycosylation activity, but does not act on alpha-1,6 bonds. Higher activities of 100%, 79% and 67.8% against amylose, soluble starch and amylopectin, respectively. Lower activity of 22% against glycogen and faint or no activity against alpha-, beta- and gamma-cyclodextrin. The polypeptide is Alpha-amylase MalA (Haloarcula japonica (strain ATCC 49778 / DSM 6131 / JCM 7785 / NBRC 101032 / NCIMB 13157 / TR-1)).